The chain runs to 198 residues: Endonuclease V (198 aa).

Residues aspartate 38 and aspartate 101 each contribute to the Mg(2+) site.

Belongs to the endonuclease V family. It depends on Mg(2+) as a cofactor.

The protein resides in the cytoplasm. The catalysed reaction is Endonucleolytic cleavage at apurinic or apyrimidinic sites to products with a 5'-phosphate.. Its function is as follows. DNA repair enzyme involved in the repair of deaminated bases. Selectively cleaves double-stranded DNA at the second phosphodiester bond 3' to a deoxyinosine leaving behind the intact lesion on the nicked DNA. The protein is Endonuclease V of Saccharolobus islandicus (strain Y.N.15.51 / Yellowstone #2) (Sulfolobus islandicus).